A 206-amino-acid polypeptide reads, in one-letter code: Proteasome subunit beta 1 (206 aa).

Positions 1 to 14 are cleaved as a propeptide — removed in mature form; by autocatalysis; the sequence is MSRIHNDPKVLLTG. T15 functions as the Nucleophile in the catalytic mechanism.

This sequence belongs to the peptidase T1B family. The 20S proteasome core is composed of 14 alpha and 14 beta subunits that assemble into four stacked heptameric rings, resulting in a barrel-shaped structure. The two inner rings, each composed of seven catalytic beta subunits, are sandwiched by two outer rings, each composed of seven alpha subunits. The catalytic chamber with the active sites is on the inside of the barrel. Has a gated structure, the ends of the cylinder being occluded by the N-termini of the alpha-subunits. Is capped at one or both ends by the proteasome regulatory ATPase, PAN.

It localises to the cytoplasm. It catalyses the reaction Cleavage of peptide bonds with very broad specificity.. The formation of the proteasomal ATPase PAN-20S proteasome complex, via the docking of the C-termini of PAN into the intersubunit pockets in the alpha-rings, triggers opening of the gate for substrate entry. Interconversion between the open-gate and close-gate conformations leads to a dynamic regulation of the 20S proteasome proteolysis activity. Its function is as follows. Component of the proteasome core, a large protease complex with broad specificity involved in protein degradation. In Caldivirga maquilingensis (strain ATCC 700844 / DSM 13496 / JCM 10307 / IC-167), this protein is Proteasome subunit beta 1.